Consider the following 132-residue polypeptide: ATP synthase epsilon chain, chloroplastic (132 aa).

Belongs to the ATPase epsilon chain family. In terms of assembly, F-type ATPases have 2 components, CF(1) - the catalytic core - and CF(0) - the membrane proton channel. CF(1) has five subunits: alpha(3), beta(3), gamma(1), delta(1), epsilon(1). CF(0) has three main subunits: a, b and c.

It is found in the plastid. The protein localises to the chloroplast thylakoid membrane. Functionally, produces ATP from ADP in the presence of a proton gradient across the membrane. The protein is ATP synthase epsilon chain, chloroplastic of Pylaiella littoralis (Seaweed).